The primary structure comprises 659 residues: Pentatricopeptide repeat-containing protein At3g48810 (659 aa).

PPR repeat units follow at residues 75 to 109, 110 to 144, 145 to 179, 180 to 214, 215 to 243, 245 to 279, 280 to 314, 315 to 350, 351 to 385, 386 to 420, 421 to 455, 456 to 490, 492 to 526, 527 to 561, 562 to 598, and 599 to 633; these read TPLTFEVMIRKLAMDGQVDSVQYLLQQMKLQGFHC, SEDLFISVISVYRQVGLAERAVEMFYRIKEFGCDP, SVKIYNHVLDTLLGENRIQMIYMVYRDMKRDGFEP, NVFTYNVLLKALCKNNKVDGAKKLLVEMSNKGCCP, DAVSYTTVISSMCEVGLVKEGRELAERFE, VVSVYNALINGLCKEHDYKGAFELMREMVEKGISP, NVISYSTLINVLCNSGQIELAFSFLTQMLKRGCHP, NIYTLSSLVKGCFLRGTTFDALDLWNQMIRGFGLQP, NVVAYNTLVQGFCSHGNIVKAVSVFSHMEEIGCSP, NIRTYGSLINGFAKRGSLDGAVYIWNKMLTSGCCP, NVVVYTNMVEALCRHSKFKEAESLIEIMSKENCAP, SVPTFNAFIKGLCDAGRLDWAEKVFRQMEQQHRCP, NIVTYNELLDGLAKANRIEEAYGLTREIFMRGVEW, SSSTYNTLLHGSCNAGLPGIALQLVGKMMVDGKSP, DEITMNMIILAYCKQGKAERAAQMLDLVSCGRRKWRP, and DVISYTNVIWGLCRSNCREDGVILLERMISAGIVP.

The protein belongs to the PPR family. P subfamily.

This is Pentatricopeptide repeat-containing protein At3g48810 from Arabidopsis thaliana (Mouse-ear cress).